The primary structure comprises 133 residues: Single-stranded DNA-binding protein 2 (133 aa).

In terms of domain architecture, SSB spans 1 to 103 (MNKTILIGRL…VVAEEVKFLE (103 aa)).

In terms of assembly, homotetramer.

The chain is Single-stranded DNA-binding protein 2 (ssb2) from Clostridium acetobutylicum (strain ATCC 824 / DSM 792 / JCM 1419 / IAM 19013 / LMG 5710 / NBRC 13948 / NRRL B-527 / VKM B-1787 / 2291 / W).